Consider the following 319-residue polypeptide: Putative peptide biosynthesis protein YydG (319 aa).

The region spanning 1-214 (MYNKTVSINL…HCPGYDIVYH (214 aa)) is the Radical SAM core domain. [4Fe-4S] cluster is bound by residues cysteine 14, cysteine 18, and cysteine 21.

[4Fe-4S] cluster is required as a cofactor.

Functionally, required for production of the modified peptide YydF. May activate a metalloenzyme (Potential). The polypeptide is Putative peptide biosynthesis protein YydG (yydG) (Bacillus subtilis (strain 168)).